Consider the following 214-residue polypeptide: HFQNYSSTKEGSLYSISLWGNRIPKGVNKDFVLSTTKSEVSFFSQNISISKGQGNTRNRTGSFSTSFGSKNVFTYPHETGNTMLFPLLILLLFTFFIGFIGIPFDNRTMDNGIVRLTILSKWLIPSINFTQESSNFSINSYEFITNAISSVSLAILGLFIAYIFYGSAYSFFQNLDLQNSFYKGSPKKNFFYQVKKKIYSWSYNRGYIDIFYSX.

The next 2 helical transmembrane spans lie at 84–104 and 152–172; these read LFPLLILLLFTFFIGFIGIPF and SLAILGLFIAYIFYGSAYSFF.

Belongs to the complex I subunit 5 family. As to quaternary structure, NDH is composed of at least 16 different subunits, 5 of which are encoded in the nucleus.

It is found in the plastid. Its subcellular location is the chloroplast thylakoid membrane. It catalyses the reaction a plastoquinone + NADH + (n+1) H(+)(in) = a plastoquinol + NAD(+) + n H(+)(out). The catalysed reaction is a plastoquinone + NADPH + (n+1) H(+)(in) = a plastoquinol + NADP(+) + n H(+)(out). NDH shuttles electrons from NAD(P)H:plastoquinone, via FMN and iron-sulfur (Fe-S) centers, to quinones in the photosynthetic chain and possibly in a chloroplast respiratory chain. The immediate electron acceptor for the enzyme in this species is believed to be plastoquinone. Couples the redox reaction to proton translocation, and thus conserves the redox energy in a proton gradient. The sequence is that of NAD(P)H-quinone oxidoreductase subunit 5, chloroplastic (ndhF) from Brachypodium pinnatum (Tor grass).